A 272-amino-acid polypeptide reads, in one-letter code: 1,4-dihydroxy-2-naphthoyl-CoA synthase (272 aa).

Residues R33, 72–76, Y84, 116–120, T142, S148, Y245, and K260 contribute to the substrate site; these read SGGDQ and YAIGG. 141–143 contributes to the hydrogencarbonate binding site; the sequence is QTG.

It belongs to the enoyl-CoA hydratase/isomerase family. MenB subfamily. It depends on hydrogencarbonate as a cofactor.

The catalysed reaction is 2-succinylbenzoyl-CoA + H(+) = 1,4-dihydroxy-2-naphthoyl-CoA + H2O. It functions in the pathway quinol/quinone metabolism; 1,4-dihydroxy-2-naphthoate biosynthesis; 1,4-dihydroxy-2-naphthoate from chorismate: step 6/7. The protein operates within quinol/quinone metabolism; menaquinone biosynthesis. Converts o-succinylbenzoyl-CoA (OSB-CoA) to 1,4-dihydroxy-2-naphthoyl-CoA (DHNA-CoA). This chain is 1,4-dihydroxy-2-naphthoyl-CoA synthase, found in Staphylococcus epidermidis (strain ATCC 35984 / DSM 28319 / BCRC 17069 / CCUG 31568 / BM 3577 / RP62A).